Here is an 829-residue protein sequence, read N- to C-terminus: Probable methyltransferase PMT26 (829 aa).

Topologically, residues 1–17 (MAQPRYTRIDNRRPSSN) are cytoplasmic. A helical; Signal-anchor for type II membrane protein transmembrane segment spans residues 18-38 (YCSTVTVVVFVALCLVGIWMM). At 39 to 829 (TSSSVGPAQN…EVETLTYAIG (791 aa)) the chain is on the lumenal side. The segment at 55 to 258 (DNKDGIKKQM…TSGDLSPPGA (204 aa)) is disordered. Composition is skewed to basic and acidic residues over residues 85–143 (NEDK…DSKS), 151–160 (LDEKKDLKDN), 168–177 (TNEKQTKPET), and 187–231 (ENQK…KENT). N-linked (GlcNAc...) asparagine glycans are attached at residues Asn-215, Asn-247, Asn-264, and Asn-270. Over residues 241-252 (QEGQSKNETSGD) the composition is skewed to polar residues. A disordered region spans residues 271–291 (GSFSTQATESKNEKEAQKGSG). A compositionally biased stretch (basic and acidic residues) spans 280–291 (SKNEKEAQKGSG). Residues Asn-302, Asn-579, Asn-595, and Asn-756 are each glycosylated (N-linked (GlcNAc...) asparagine).

The protein belongs to the methyltransferase superfamily.

It is found in the golgi apparatus membrane. This chain is Probable methyltransferase PMT26, found in Arabidopsis thaliana (Mouse-ear cress).